The primary structure comprises 188 residues: Probable manganese efflux pump MntP (188 aa).

The next 6 membrane-spanning stretches (helical) occupy residues 3–23, 41–61, 66–86, 106–128, 143–163, and 168–188; these read FTAT…ASIG, LIFG…GILA, LEWN…RMII, WLLV…GLAF, ATLI…PMLG, and ILGG…HFHG.

Belongs to the MntP (TC 9.B.29) family.

Its subcellular location is the cell inner membrane. In terms of biological role, probably functions as a manganese efflux pump. The polypeptide is Probable manganese efflux pump MntP (Salmonella typhimurium (strain LT2 / SGSC1412 / ATCC 700720)).